Here is a 323-residue protein sequence, read N- to C-terminus: Beta-ketoacyl-[acyl-carrier-protein] synthase III (323 aa).

Active-site residues include C113 and H250. The ACP-binding stretch occupies residues 251–255 (QANRR). N280 is a catalytic residue.

Belongs to the thiolase-like superfamily. FabH family. In terms of assembly, homodimer.

Its subcellular location is the cytoplasm. The enzyme catalyses malonyl-[ACP] + acetyl-CoA + H(+) = 3-oxobutanoyl-[ACP] + CO2 + CoA. Its pathway is lipid metabolism; fatty acid biosynthesis. Catalyzes the condensation reaction of fatty acid synthesis by the addition to an acyl acceptor of two carbons from malonyl-ACP. Catalyzes the first condensation reaction which initiates fatty acid synthesis and may therefore play a role in governing the total rate of fatty acid production. Possesses both acetoacetyl-ACP synthase and acetyl transacylase activities. Its substrate specificity determines the biosynthesis of branched-chain and/or straight-chain of fatty acids. The sequence is that of Beta-ketoacyl-[acyl-carrier-protein] synthase III from Rhizobium rhizogenes (strain K84 / ATCC BAA-868) (Agrobacterium radiobacter).